A 357-amino-acid polypeptide reads, in one-letter code: Protein RecA (357 aa).

69-76 (GPESSGKT) serves as a coordination point for ATP. The disordered stretch occupies residues 337-357 (SANSVAKNNEDDEDEDVEEEE). Residues 346-357 (EDDEDEDVEEEE) are compositionally biased toward acidic residues.

This sequence belongs to the RecA family.

It localises to the cytoplasm. In terms of biological role, can catalyze the hydrolysis of ATP in the presence of single-stranded DNA, the ATP-dependent uptake of single-stranded DNA by duplex DNA, and the ATP-dependent hybridization of homologous single-stranded DNAs. It interacts with LexA causing its activation and leading to its autocatalytic cleavage. The sequence is that of Protein RecA from Nostoc sp. (strain PCC 7120 / SAG 25.82 / UTEX 2576).